The chain runs to 157 residues: 2-C-methyl-D-erythritol 2,4-cyclodiphosphate synthase (157 aa).

A divalent metal cation contacts are provided by Asp-8 and His-10. 4-CDP-2-C-methyl-D-erythritol 2-phosphate-binding positions include Asp-8–His-10 and His-34–Ser-35. An a divalent metal cation-binding site is contributed by His-42. Residues Asp-56 to Gly-58, Phe-61 to Asp-65, Thr-132 to Glu-135, Phe-139, and Arg-142 each bind 4-CDP-2-C-methyl-D-erythritol 2-phosphate.

The protein belongs to the IspF family. In terms of assembly, homotrimer. Requires a divalent metal cation as cofactor.

It carries out the reaction 4-CDP-2-C-methyl-D-erythritol 2-phosphate = 2-C-methyl-D-erythritol 2,4-cyclic diphosphate + CMP. Its pathway is isoprenoid biosynthesis; isopentenyl diphosphate biosynthesis via DXP pathway; isopentenyl diphosphate from 1-deoxy-D-xylulose 5-phosphate: step 4/6. Functionally, involved in the biosynthesis of isopentenyl diphosphate (IPP) and dimethylallyl diphosphate (DMAPP), two major building blocks of isoprenoid compounds. Catalyzes the conversion of 4-diphosphocytidyl-2-C-methyl-D-erythritol 2-phosphate (CDP-ME2P) to 2-C-methyl-D-erythritol 2,4-cyclodiphosphate (ME-CPP) with a corresponding release of cytidine 5-monophosphate (CMP). This Pseudomonas putida (strain W619) protein is 2-C-methyl-D-erythritol 2,4-cyclodiphosphate synthase.